The primary structure comprises 1754 residues: Probable outer membrane protein PmpB (1754 aa).

The first 14 residues, 1 to 14, serve as a signal peptide directing secretion; that stretch reads MSSMKWLSATAVFA. Low complexity-rich tracts occupy residues 68-105 and 212-232; these read NIPT…TPDP and SETS…PSSS. Disordered regions lie at residues 68 to 109, 190 to 235, 252 to 271, 397 to 438, 621 to 668, and 1299 to 1332; these read NIPT…KGGG, SSNS…SRAE, PAAQ…GSGG, NADA…ATAK, AAEN…STPS, and TSSA…ATTP. 2 stretches are compositionally biased toward polar residues: residues 252 to 264 and 402 to 412; these read PAAQ…STPS and ASSSPQSGSGA. 4 stretches are compositionally biased toward low complexity: residues 413-427, 636-668, 1299-1311, and 1320-1332; these read TTVS…GSDS, PTAD…STPS, TSSA…VSSS, and SAAA…ATTP. One can recognise an Autotransporter domain in the interval 1461–1754; it reads DDIAYNNFWV…MTSCGARMIF (294 aa).

The protein belongs to the PMP outer membrane protein family.

The protein localises to the secreted. Its subcellular location is the cell wall. The protein resides in the cell outer membrane. The polypeptide is Probable outer membrane protein PmpB (pmpB) (Chlamydia trachomatis serovar D (strain ATCC VR-885 / DSM 19411 / UW-3/Cx)).